The primary structure comprises 916 residues: Beta-scruin (916 aa).

Kelch repeat units follow at residues 82-133 (AVLI…YFHG), 134-187 (KVYL…IMDE), 188-235 (RIFV…NNEG), 237-289 (IYVV…TQNK), 291-341 (IWIW…KAGT), and 342-390 (QVFI…GIPV). The segment at 393–426 (SPASDITTSKTTRSGSRKTQKTLKDKQQSDIHAR) is disordered. The span at 414 to 425 (TLKDKQQSDIHA) shows a compositional bias: basic and acidic residues. Kelch repeat units follow at residues 586 to 637 (VIIA…YYRG), 638 to 691 (AIYV…VFND), 692 to 739 (SIYV…SHGG), 741 to 793 (LWVM…VCDD), 795 to 847 (IWLC…ALES), and 849 to 896 (LYLI…TIPP).

As to expression, sperm.

In terms of biological role, may have an enzymatic role. Found the acrosomal vesicle at the anterior of sperm but not in the acrosomal process. This is Beta-scruin from Limulus polyphemus (Atlantic horseshoe crab).